We begin with the raw amino-acid sequence, 404 residues long: Ubiquitin-like modifier-activating enzyme 5 (404 aa).

A Phosphoserine modification is found at Ser45. ATP is bound by residues Gly83, Asp104, Lys127, Asn150, and Asn184. Zn(2+) contacts are provided by Cys226 and Cys229. Cys250 (glycyl thioester intermediate) is an active-site residue. Residues Cys303 and Cys308 each contribute to the Zn(2+) site. The UFM1-interacting sequence (UIS) signature appears at 334–346 (IIHEDNEWGIELV). The tract at residues 347-377 (SEVSEEELKNFSGPVPDLPEGITVAYTIPKK) is linker. Phosphoserine occurs at positions 358 and 393. The UFC1-binding sequence (UFC) motif lies at 389–404 (DSGESLEDLMAKMKNM).

It belongs to the ubiquitin-activating E1 family. UBA5 subfamily. Homodimer; homodimerization is required for UFM1 activation. Interacts (via UIS motif) with UFM1; binds UFM1 via a trans-binding mechanism in which UFM1 interacts with distinct sites in both subunits of the UBA5 homodimer. Interacts (via C-terminus) with UFC1. Interacts (via UIS motif) with GABARAPL2 and, with lower affinity, with GABARAP and GABARAPL1. Widely expressed.

The protein localises to the cytoplasm. Its subcellular location is the nucleus. It is found in the endoplasmic reticulum membrane. It localises to the golgi apparatus. Its function is as follows. E1-like enzyme which specifically catalyzes the first step in ufmylation. Activates UFM1 by first adenylating its C-terminal glycine residue with ATP, and thereafter linking this residue to the side chain of a cysteine residue in E1, yielding a UFM1-E1 thioester and free AMP. Activates UFM1 via a trans-binding mechanism, in which UFM1 interacts with distinct sites in both subunits of the UBA5 homodimer. Trans-binding also promotes stabilization of the UBA5 homodimer, and enhances ATP-binding. Transfer of UFM1 from UBA5 to the E2-like enzyme UFC1 also takes place using a trans mechanism. Ufmylation plays a key role in various processes, such as ribosome recycling, response to DNA damage, interferon response or reticulophagy (also called ER-phagy). Ufmylation is essential for erythroid differentiation of both megakaryocytes and erythrocytes. This is Ubiquitin-like modifier-activating enzyme 5 from Homo sapiens (Human).